The following is a 229-amino-acid chain: Large ribosomal subunit protein uL1 (229 aa).

The protein belongs to the universal ribosomal protein uL1 family. In terms of assembly, part of the 50S ribosomal subunit.

Its function is as follows. Binds directly to 23S rRNA. The L1 stalk is quite mobile in the ribosome, and is involved in E site tRNA release. In terms of biological role, protein L1 is also a translational repressor protein, it controls the translation of the L11 operon by binding to its mRNA. In Clostridium botulinum (strain ATCC 19397 / Type A), this protein is Large ribosomal subunit protein uL1.